The chain runs to 472 residues: Siroheme synthase 1 (472 aa).

Positions methionine 1–leucine 203 are precorrin-2 dehydrogenase /sirohydrochlorin ferrochelatase. Residues glutamate 22–valine 23 and glutamine 43–threonine 44 contribute to the NAD(+) site. Residue serine 128 is modified to Phosphoserine. A uroporphyrinogen-III C-methyltransferase region spans residues glycine 215–alanine 472. Residue proline 224 participates in S-adenosyl-L-methionine binding. Aspartate 247 acts as the Proton acceptor in catalysis. Lysine 269 (proton donor) is an active-site residue. S-adenosyl-L-methionine contacts are provided by residues glycine 300–aspartate 302, isoleucine 305, threonine 330–alanine 331, methionine 382, and glycine 411.

The protein in the N-terminal section; belongs to the precorrin-2 dehydrogenase / sirohydrochlorin ferrochelatase family. In the C-terminal section; belongs to the precorrin methyltransferase family.

The catalysed reaction is uroporphyrinogen III + 2 S-adenosyl-L-methionine = precorrin-2 + 2 S-adenosyl-L-homocysteine + H(+). It carries out the reaction precorrin-2 + NAD(+) = sirohydrochlorin + NADH + 2 H(+). The enzyme catalyses siroheme + 2 H(+) = sirohydrochlorin + Fe(2+). It functions in the pathway cofactor biosynthesis; adenosylcobalamin biosynthesis; precorrin-2 from uroporphyrinogen III: step 1/1. The protein operates within cofactor biosynthesis; adenosylcobalamin biosynthesis; sirohydrochlorin from precorrin-2: step 1/1. It participates in porphyrin-containing compound metabolism; siroheme biosynthesis; precorrin-2 from uroporphyrinogen III: step 1/1. Its pathway is porphyrin-containing compound metabolism; siroheme biosynthesis; siroheme from sirohydrochlorin: step 1/1. It functions in the pathway porphyrin-containing compound metabolism; siroheme biosynthesis; sirohydrochlorin from precorrin-2: step 1/1. In terms of biological role, multifunctional enzyme that catalyzes the SAM-dependent methylations of uroporphyrinogen III at position C-2 and C-7 to form precorrin-2 via precorrin-1. Then it catalyzes the NAD-dependent ring dehydrogenation of precorrin-2 to yield sirohydrochlorin. Finally, it catalyzes the ferrochelation of sirohydrochlorin to yield siroheme. This chain is Siroheme synthase 1, found in Yersinia pseudotuberculosis serotype I (strain IP32953).